The chain runs to 398 residues: Dual-specificity RNA methyltransferase RlmN (398 aa).

Glu-119 (proton acceptor) is an active-site residue. The Radical SAM core domain maps to 125–364 (EEERATLCVS…TIVRKTRGDD (240 aa)). Cys-132 and Cys-369 are joined by a disulfide. Residues Cys-139, Cys-143, and Cys-146 each contribute to the [4Fe-4S] cluster site. S-adenosyl-L-methionine-binding positions include 193–194 (GE), Ser-225, 247–249 (SLH), and Asn-326. The S-methylcysteine intermediate role is filled by Cys-369.

This sequence belongs to the radical SAM superfamily. RlmN family. Requires [4Fe-4S] cluster as cofactor.

Its subcellular location is the cytoplasm. It catalyses the reaction adenosine(2503) in 23S rRNA + 2 reduced [2Fe-2S]-[ferredoxin] + 2 S-adenosyl-L-methionine = 2-methyladenosine(2503) in 23S rRNA + 5'-deoxyadenosine + L-methionine + 2 oxidized [2Fe-2S]-[ferredoxin] + S-adenosyl-L-homocysteine. The catalysed reaction is adenosine(37) in tRNA + 2 reduced [2Fe-2S]-[ferredoxin] + 2 S-adenosyl-L-methionine = 2-methyladenosine(37) in tRNA + 5'-deoxyadenosine + L-methionine + 2 oxidized [2Fe-2S]-[ferredoxin] + S-adenosyl-L-homocysteine. In terms of biological role, specifically methylates position 2 of adenine 2503 in 23S rRNA and position 2 of adenine 37 in tRNAs. m2A2503 modification seems to play a crucial role in the proofreading step occurring at the peptidyl transferase center and thus would serve to optimize ribosomal fidelity. This is Dual-specificity RNA methyltransferase RlmN from Pectobacterium atrosepticum (strain SCRI 1043 / ATCC BAA-672) (Erwinia carotovora subsp. atroseptica).